A 333-amino-acid chain; its full sequence is DNA-directed RNA polymerase subunit alpha (333 aa).

Residues 1–246 (MKKMVQIKYK…AHLQVIGDVK (246 aa)) are alpha N-terminal domain (alpha-NTD). An alpha C-terminal domain (alpha-CTD) region spans residues 262 to 333 (VEPSIHSVDI…YNVTLNRGEK (72 aa)).

The protein belongs to the RNA polymerase alpha chain family. Homodimer. The RNAP catalytic core consists of 2 alpha, 1 beta, 1 beta' and 1 omega subunit. When a sigma factor is associated with the core the holoenzyme is formed, which can initiate transcription.

The enzyme catalyses RNA(n) + a ribonucleoside 5'-triphosphate = RNA(n+1) + diphosphate. In terms of biological role, DNA-dependent RNA polymerase catalyzes the transcription of DNA into RNA using the four ribonucleoside triphosphates as substrates. The protein is DNA-directed RNA polymerase subunit alpha of Mycoplasmopsis pulmonis (strain UAB CTIP) (Mycoplasma pulmonis).